We begin with the raw amino-acid sequence, 127 residues long: Probable 4-amino-4-deoxy-L-arabinose-phosphoundecaprenol flippase subunit ArnF (127 aa).

The helical transmembrane segment at 1–21 (MMGYFWALMSVLLVSGAQLMM) threads the bilayer. Over 22–48 (KWAMVSLPPVGQTDALMSAFMSVTPGA) the chain is Periplasmic. The helical transmembrane segment at 49–69 (VALVIGLFAYVFSMGCWYMAL) threads the bilayer. Residues 70-77 (RRIALSKA) are Cytoplasmic-facing. Residues 78–98 (YPLLSLSYVLVWAAAIGLPWL) traverse the membrane as a helical segment. Residues 99-101 (HEP) are Periplasmic-facing. The chain crosses the membrane as a helical span at residues 102–122 (FSVGKLAGVSVIFVGLLLVCL). Topologically, residues 123-127 (PDKKS) are cytoplasmic.

The protein belongs to the ArnF family. As to quaternary structure, heterodimer of ArnE and ArnF.

The protein resides in the cell inner membrane. It functions in the pathway bacterial outer membrane biogenesis; lipopolysaccharide biosynthesis. Its function is as follows. Translocates 4-amino-4-deoxy-L-arabinose-phosphoundecaprenol (alpha-L-Ara4N-phosphoundecaprenol) from the cytoplasmic to the periplasmic side of the inner membrane. The sequence is that of Probable 4-amino-4-deoxy-L-arabinose-phosphoundecaprenol flippase subunit ArnF from Enterobacter sp. (strain 638).